The primary structure comprises 691 residues: MSHSRRLSLEPAIDSITGRFRDLQRNDDDVNKPDFRELDLGSPVSTLMPRGSASSSAAATPTSSSGSSGSASGKPSVSSQMAKRLDDAYKSHSGELSSPGSGMPTTTRILKPGHRRSSSTGTPLIFSGSSFTSATSHTSPQGGGSGATSAVSPNTGVLPAGNICPSGRILKTGMASRTSSRTETLCTGTGNYGHGNVVRSGGGGGTSGKAVRVAENGENPEELKRMGNDMYRRGSFSEALSLYDRAILISPGNAAYRSNRAAALTALRRLGEAVKECLEAVRIDPSYSRAHQRLASLYLRLGEAENARRHICFSGQCPDQADLQRLQTLEKHLRRCWEARKIGDWKTAIKETDAAIANGADSSPQLVACKAEAFLRLKQIEDSDFCVSCIPRLDHHYHSQPQVKLFGMVVEAYVLCIQAQVDMALGRFENAVVKAERAAMLDQTNPEVVSVLNNVKMVVRARTRGNELFSSGRFSEACVAYGDGLKQDDSNSVLYCNRAACWYKLGLWEKSVEDCNHALKSQPSYIKALLRRAASYGKLGRWEDAVKDYEFLRRELPGDSEVAESLERAKTVLMNRSQESKSLGFNNEVEAVSTLDKFKKSVALPGVSVFHFKSSSNRQCEEISPFINTLCLRYPLVHFFMVDVEESMALAKAESIRKVPTFKMYKNGDKVKEMVCPSHQFLEDSIKHFLL.

Disordered stretches follow at residues 1–153 (MSHS…AVSP) and 174–209 (MASR…TSGK). A Phosphoserine modification is found at S8. Residues 19-39 (RFRDLQRNDDDVNKPDFRELD) show a composition bias toward basic and acidic residues. Phosphoserine is present on residues S42 and S45. Positions 51–79 (GSASSSAAATPTSSSGSSGSASGKPSVSS) are enriched in low complexity. Residues 83 to 93 (KRLDDAYKSHS) show a composition bias toward basic and acidic residues. 3 stretches are compositionally biased toward polar residues: residues 94-108 (GELS…TTTR), 118-140 (SSTG…HTSP), and 175-189 (ASRT…CTGT). 8 TPR repeats span residues 220-253 (PEEL…SPGN), 255-287 (AYRS…DPSY), 289-321 (RAHQ…PDQA), 327-362 (QTLE…GADS), 412-445 (AYVL…DQTN), 458-491 (VVRA…DDSN), 492-525 (SVLY…QPSY), and 527-559 (KALL…LPGD). Positions 596 to 683 (DKFKKSVALP…MVCPSHQFLE (88 aa)) constitute a Thioredoxin domain.

As to quaternary structure, interacts with BRL2. As to expression, expressed in embryos and organ primordia in shoot and root. In primary and cauline leaves and petals, is expressed in hydathodes, guard cells, petiole cells and cells associated with differentiating vascular bundles.

Involved in osmotic and salt stress tolerance. May play a role in the control of meristematic cell size during osmotic stress. May function as an adapter protein for BRL2 and may be required for signaling affecting leaf vascular tissue pattern formation. The polypeptide is Inactive TPR repeat-containing thioredoxin TTL3 (Arabidopsis thaliana (Mouse-ear cress)).